The sequence spans 631 residues: Phosphomethylpyrimidine synthase (631 aa).

Substrate is bound by residues Asn239, Met268, Tyr297, His333, 353–355 (SRG), 394–397 (DGLR), and Glu433. Zn(2+) is bound at residue His437. Residue Tyr460 participates in substrate binding. His501 contributes to the Zn(2+) binding site. Cys581, Cys584, and Cys589 together coordinate [4Fe-4S] cluster.

It belongs to the ThiC family. In terms of assembly, homodimer. [4Fe-4S] cluster is required as a cofactor.

It carries out the reaction 5-amino-1-(5-phospho-beta-D-ribosyl)imidazole + S-adenosyl-L-methionine = 4-amino-2-methyl-5-(phosphooxymethyl)pyrimidine + CO + 5'-deoxyadenosine + formate + L-methionine + 3 H(+). It functions in the pathway cofactor biosynthesis; thiamine diphosphate biosynthesis. Functionally, catalyzes the synthesis of the hydroxymethylpyrimidine phosphate (HMP-P) moiety of thiamine from aminoimidazole ribotide (AIR) in a radical S-adenosyl-L-methionine (SAM)-dependent reaction. The chain is Phosphomethylpyrimidine synthase from Escherichia coli O6:H1 (strain CFT073 / ATCC 700928 / UPEC).